The primary structure comprises 663 residues: Leishmanolysin-like peptidase (663 aa).

Residue His246 coordinates Zn(2+). Glu247 is an active-site residue. The Zn(2+) site is built by His250 and His353.

It belongs to the peptidase M8 family. It depends on Zn(2+) as a cofactor.

The protein resides in the cytoplasm. Its function is as follows. Essential for the coordination of mitotic progression, and also plays a role in cell migration. The chain is Leishmanolysin-like peptidase from Caenorhabditis elegans.